The primary structure comprises 250 residues: 2,3-bisphosphoglycerate-dependent phosphoglycerate mutase (250 aa).

Substrate contacts are provided by residues 10-17 (RHGESQWN), 23-24 (TG), R62, 89-92 (ERHY), K100, 116-117 (RR), and 185-186 (GN). The active-site Tele-phosphohistidine intermediate is the H11. The active-site Proton donor/acceptor is the E89.

The protein belongs to the phosphoglycerate mutase family. BPG-dependent PGAM subfamily. In terms of assembly, homodimer.

The catalysed reaction is (2R)-2-phosphoglycerate = (2R)-3-phosphoglycerate. The protein operates within carbohydrate degradation; glycolysis; pyruvate from D-glyceraldehyde 3-phosphate: step 3/5. Its function is as follows. Catalyzes the interconversion of 2-phosphoglycerate and 3-phosphoglycerate. The protein is 2,3-bisphosphoglycerate-dependent phosphoglycerate mutase of Salmonella choleraesuis (strain SC-B67).